The primary structure comprises 570 residues: Proline--tRNA ligase (570 aa).

Belongs to the class-II aminoacyl-tRNA synthetase family. ProS type 1 subfamily. In terms of assembly, homodimer.

Its subcellular location is the cytoplasm. The enzyme catalyses tRNA(Pro) + L-proline + ATP = L-prolyl-tRNA(Pro) + AMP + diphosphate. In terms of biological role, catalyzes the attachment of proline to tRNA(Pro) in a two-step reaction: proline is first activated by ATP to form Pro-AMP and then transferred to the acceptor end of tRNA(Pro). As ProRS can inadvertently accommodate and process non-cognate amino acids such as alanine and cysteine, to avoid such errors it has two additional distinct editing activities against alanine. One activity is designated as 'pretransfer' editing and involves the tRNA(Pro)-independent hydrolysis of activated Ala-AMP. The other activity is designated 'posttransfer' editing and involves deacylation of mischarged Ala-tRNA(Pro). The misacylated Cys-tRNA(Pro) is not edited by ProRS. The sequence is that of Proline--tRNA ligase from Thermoanaerobacter pseudethanolicus (strain ATCC 33223 / 39E) (Clostridium thermohydrosulfuricum).